We begin with the raw amino-acid sequence, 946 residues long: Protein RRC1 (946 aa).

2 disordered regions span residues 1 to 29 (MSSFSITRKKTPFQKHREEEEARKKKAED) and 41 to 183 (SFQG…NLYV). Composition is skewed to basic and acidic residues over residues 15–29 (KHREEEEARKKKAED), 62–75 (DKPKVDSEGEKSKD), and 98–147 (KGKE…DRQG). Residues 179–260 (TNLYVGNLSP…YELKIGWGKA (82 aa)) enclose the RRM domain. The SURP motif repeat unit spans residues 329 to 372 (VIDTLALYVLDGECAFEQAIMERGRGNPLFKFMFELGSKEHTYY). One can recognise a CID domain in the interval 437-582 (LTDPQRDEFE…GLRSTFLRSG (146 aa)). An SAP domain is found at 631–665 (LMNLPIAELERRCRHNGLSLVGGRVMMVTRLLSLE). 2 disordered regions span residues 740-797 (ASKW…EQRQ) and 836-946 (EVDY…RGTR). A compositionally biased stretch (polar residues) spans 757-767 (SSSSGSDNTGG). Basic and acidic residues-rich tracts occupy residues 772–781 (ADGEDLKGND), 854–868 (IIERKEKREDSQESS), and 886–946 (STRE…RGTR).

Component of the SWAP1-SFPS-RRC1 splicing factor complex which modulates pre-mRNA splicing to promote photomorphogenesis. Interacts with SWAP1 in a light-independent manner. In terms of tissue distribution, expressed in leaves, inflorescence stems, roots, flower buds, open flowers and siliques.

It localises to the nucleus speckle. In terms of biological role, as a member of the SWAP1-SFPS-RRC1 splicing factor complex, modulates photomorphogenesis by regulating the gene expression and pre-messenger RNA (mRNA) alternative splicing of a large number of genes, including those involved in plant responses to light signaling. SR-like splicing factor required for phytochrome B (phyB) signal transduction and involved in phyB-dependent alternative splicing. The polypeptide is Protein RRC1 (Arabidopsis thaliana (Mouse-ear cress)).